A 930-amino-acid polypeptide reads, in one-letter code: Translation initiation factor IF-2 (930 aa).

Low complexity predominate over residues 50–67 (FKPAAAPKVEAKPAAPKV). Disordered regions lie at residues 50 to 196 (FKPA…RIDF) and 260 to 346 (EVVP…HELP). Composition is skewed to basic and acidic residues over residues 68 to 90 (SAEK…EAKP) and 110 to 125 (FKAE…AERR). Low complexity predominate over residues 129 to 141 (KGNNRDQQQNGNR). 2 stretches are compositionally biased toward basic and acidic residues: residues 157–172 (RDNR…EQGQ) and 262–295 (VPEK…DGPR). The span at 309-318 (NQKNSNWNNN) shows a compositional bias: low complexity. Positions 337-346 (VTERKFHELP) are enriched in basic and acidic residues. In terms of domain architecture, tr-type G spans 432-599 (ERPPVVTIMG…TVLLVAEIQE (168 aa)). Residues 441–448 (GHVDHGKT) form a G1 region. GTP is bound at residue 441-448 (GHVDHGKT). A G2 region spans residues 466–470 (GITQH). The interval 487–490 (DTPG) is G3. Residues 487-491 (DTPGH) and 541-544 (NKID) each bind GTP. The G4 stretch occupies residues 541–544 (NKID). Residues 577 to 579 (SAK) form a G5 region.

It belongs to the TRAFAC class translation factor GTPase superfamily. Classic translation factor GTPase family. IF-2 subfamily.

Its subcellular location is the cytoplasm. Its function is as follows. One of the essential components for the initiation of protein synthesis. Protects formylmethionyl-tRNA from spontaneous hydrolysis and promotes its binding to the 30S ribosomal subunits. Also involved in the hydrolysis of GTP during the formation of the 70S ribosomal complex. This chain is Translation initiation factor IF-2, found in Streptococcus pneumoniae serotype 19F (strain G54).